The primary structure comprises 402 residues: MDIATGPESLERCFPRGQTDCAKMLDGIKMEEHALRPGPATLGVLLGSDCPHPAVCEGCQRPISDRFLMRVNESSWHEECLQCAACQQALTTSCYFRDRKLYCKQDYQQLFAAKCSGCMEKIAPTEFVMRALECVYHLGCFCCCVCERQLRKGDEFVLKEGQLLCKGDYEKEKDLLSSVSPDESDSVKSEDEDGDMKPAKGQGSQSKGSGDDGKDPRRPKRPRTILTTQQRRAFKASFEVSSKPCRKVRETLAAETGLSVRVVQVWFQNQRAKMKKLARRHQQQQEQQNSQRLGQEVLSSRMEGMMASYTPLAPPQQQIVAMEQSPYGSSDPFQQGLTPPQMPGDHMNPYGNDSIFHDIDSDTSLTSLSDCFLGSSDVGSLQARVGNPIDRLYSMQSSYFAS.

2 consecutive LIM zinc-binding domains span residues 56-106 (CEGC…CKQD) and 115-168 (CSGC…CKGD). 2 disordered regions span residues 176-229 (LSSV…LTTQ) and 326-346 (PYGSSDPFQQGLTPPQMPGDH). Residues 219–278 (PKRPRTILTTQQRRAFKASFEVSSKPCRKVRETLAAETGLSVRVVQVWFQNQRAKMKKLA) constitute a DNA-binding region (homeobox). Residues 326–338 (PYGSSDPFQQGLT) show a composition bias toward polar residues.

In terms of assembly, interacts with DHX9. As to expression, expressed in most tissues. Highest levels in testis, thyroid, duodenum, skeletal muscle, and pancreatic islets.

Its subcellular location is the nucleus. Its function is as follows. Transcription factor involved in the regulation of podocyte-expressed genes. Essential for the specification of dorsal limb fate at both the zeugopodal and autopodal levels. This chain is LIM homeobox transcription factor 1-beta (LMX1B), found in Homo sapiens (Human).